Reading from the N-terminus, the 707-residue chain is Anaerobic ribonucleoside-triphosphate reductase (707 aa).

An ATP-cone domain is found at 4–95 (FGVIKRDGSR…EYRHDRDLAR (92 aa)). The 124-residue stretch at 584–707 (KKVNPYDKLD…EEVKRRVKHL (124 aa)) folds into the Glycine radical domain. Residues cysteine 645, cysteine 648, cysteine 663, and cysteine 666 each coordinate Zn(2+). Residue glycine 682 is modified to Glycine radical.

It belongs to the anaerobic ribonucleoside-triphosphate reductase family. Forms a tetramer composed of two NrdD and two NrdG subunits.

It carries out the reaction a ribonucleoside 5'-triphosphate + formate + H(+) = a 2'-deoxyribonucleoside 5'-triphosphate + CO2 + H2O. With respect to regulation, activated under anaerobic conditions by NrdG, a tightly associated activase. Activation involves the formation of a glycyl radical at Gly-682. Functionally, catalyzes the conversion of ribonucleotides into deoxyribonucleotides, which are required for DNA synthesis and repair. The sequence is that of Anaerobic ribonucleoside-triphosphate reductase (nrdD) from Haemophilus influenzae (strain ATCC 51907 / DSM 11121 / KW20 / Rd).